The sequence spans 466 residues: Alpha-1A adrenergic receptor (466 aa).

Over 1–27 (MVLLSENASEGSNCTHPPAPVNISKAI) the chain is Extracellular. N-linked (GlcNAc...) asparagine glycans are attached at residues N7, N13, and N22. A helical membrane pass occupies residues 28–51 (LLGVILGGLIIFGVLGNILVILSV). The Cytoplasmic portion of the chain corresponds to 52–64 (ACHRHLHSVTHYY). The helical transmembrane segment at 65–88 (IVNLAVADLLLTSTVLPFSAIFEI) threads the bilayer. Topologically, residues 89–99 (LGYWAFGRVFC) are extracellular. C99 and C176 are disulfide-bonded. Residues 100-122 (NIWAAVDVLCCTASIMGLCIISI) traverse the membrane as a helical segment. Over 123 to 143 (DRYIGVSYPLRYPTIVTQRRG) the chain is Cytoplasmic. A helical transmembrane segment spans residues 144-167 (VRALLCVWVLSLVISIGPLFGWRQ). Residues 168–181 (PAPEDETICQINEE) lie on the Extracellular side of the membrane. The chain crosses the membrane as a helical span at residues 182–205 (PGYVLFSALGSFYVPLAIILVMYC). At 206–273 (RVYVVAKRES…FSREKKAAKT (68 aa)) the chain is on the cytoplasmic side. S215 bears the Phosphoserine; by PKA mark. A helical transmembrane segment spans residues 274–297 (LGIVVGCFVLCWLPFFLVMPIGSF). Residues 298–305 (FPDFKPSE) lie on the Extracellular side of the membrane. A helical membrane pass occupies residues 306–329 (TVFKIVFWLGYLNSCINPIIYPCS). Residues 330-466 (SQEFKKAFQN…ISLGENGEEV (137 aa)) lie on the Cytoplasmic side of the membrane. Residues 334–349 (KKAFQNVLRIQCLRRR) carry the Nuclear localization signal motif. The S-palmitoyl cysteine moiety is linked to residue C345.

The protein belongs to the G-protein coupled receptor 1 family. Adrenergic receptor subfamily. ADRA1A sub-subfamily. As to quaternary structure, homo- and heterooligomer. Heterooligomerizes with ADRA1B homooligomers in cardiac myocytes. Interacts with CAVIN4. C-terminal Ser or Thr residues may be phosphorylated. In terms of tissue distribution, abundant in heart, brain, aorta, vena cava, vas deferens, submaxillary gland, lung, and kidney. Found at lower levels in prostate, parotid gland and skeletal muscle.

Its subcellular location is the nucleus membrane. It localises to the cell membrane. The protein localises to the cytoplasm. The protein resides in the membrane. It is found in the caveola. Functionally, this alpha-adrenergic receptor mediates its action by association with G proteins that activate a phosphatidylinositol-calcium second messenger system. Its effect is mediated by G(q) and G(11) proteins. Nuclear ADRA1A-ADRA1B heterooligomers regulate phenylephrine (PE)-stimulated ERK signaling in cardiac myocytes. This is Alpha-1A adrenergic receptor (Adra1a) from Rattus norvegicus (Rat).